The primary structure comprises 541 residues: Eukaryotic translation initiation factor 3 subunit E (541 aa).

The region spanning V252–P443 is the PCI domain. The disordered stretch occupies residues A466–N541. Over residues N490 to N502 the composition is skewed to gly residues. Residues Q506–E522 are compositionally biased toward basic and acidic residues. Over residues S523 to N541 the composition is skewed to low complexity.

This sequence belongs to the eIF-3 subunit E family. Component of the eukaryotic translation initiation factor 3 (eIF-3) complex.

It localises to the cytoplasm. Its function is as follows. Component of the eukaryotic translation initiation factor 3 (eIF-3) complex, which is involved in protein synthesis of a specialized repertoire of mRNAs and, together with other initiation factors, stimulates binding of mRNA and methionyl-tRNAi to the 40S ribosome. The eIF-3 complex specifically targets and initiates translation of a subset of mRNAs involved in cell proliferation. The chain is Eukaryotic translation initiation factor 3 subunit E from Mycosarcoma maydis (Corn smut fungus).